Consider the following 247-residue polypeptide: ATP synthase subunit C lysine N-methyltransferase (247 aa).

Residue methionine 1 is modified to N-acetylmethionine. A compositionally biased stretch (basic and acidic residues) spans 1-12 (MERVGTPEEERQ). Residues 1–25 (MERVGTPEEERQAGPVLPTSLESDS) are disordered. Residues 34–54 (LITGVVGGALLTVYAVATPFI) form a helical membrane-spanning segment. Residues 51–85 (TPFITPALRKVCLPFVPATSKQVENVVRMLRHRRG) form a required for mitochondrial location region. The segment at 209-247 (QRGRGGRPNQEWVGQKNLSETAGLQASSSETRSKLLDVE) is disordered. Residues 224-238 (KNLSETAGLQASSSE) are compositionally biased toward polar residues.

This sequence belongs to the ANT/ATPSC lysine N-methyltransferase family. Ubiquitously expressed.

Its subcellular location is the mitochondrion membrane. It catalyses the reaction L-lysyl-[protein] + 3 S-adenosyl-L-methionine = N(6),N(6),N(6)-trimethyl-L-lysyl-[protein] + 3 S-adenosyl-L-homocysteine + 3 H(+). In terms of biological role, mitochondrial protein-lysine N-methyltransferase that trimethylates ATP synthase subunit C, ATP5MC1 and ATP5MC2. Trimethylation is required for proper incorporation of the C subunit into the ATP synthase complex and mitochondrial respiration. Promotes chronic pain. Involved in persistent inflammatory and neuropathic pain: methyltransferase activity in the mitochondria of sensory neurons promotes chronic pain via a pathway that depends on the production of reactive oxygen species (ROS) and on the engagement of spinal cord microglia. The sequence is that of ATP synthase subunit C lysine N-methyltransferase from Mus musculus (Mouse).